The following is a 393-amino-acid chain: NAD(P)H-quinone oxidoreductase subunit H, chloroplastic (393 aa).

This sequence belongs to the complex I 49 kDa subunit family. NDH is composed of at least 16 different subunits, 5 of which are encoded in the nucleus.

The protein resides in the plastid. Its subcellular location is the chloroplast thylakoid membrane. The catalysed reaction is a plastoquinone + NADH + (n+1) H(+)(in) = a plastoquinol + NAD(+) + n H(+)(out). The enzyme catalyses a plastoquinone + NADPH + (n+1) H(+)(in) = a plastoquinol + NADP(+) + n H(+)(out). In terms of biological role, NDH shuttles electrons from NAD(P)H:plastoquinone, via FMN and iron-sulfur (Fe-S) centers, to quinones in the photosynthetic chain and possibly in a chloroplast respiratory chain. The immediate electron acceptor for the enzyme in this species is believed to be plastoquinone. Couples the redox reaction to proton translocation, and thus conserves the redox energy in a proton gradient. This chain is NAD(P)H-quinone oxidoreductase subunit H, chloroplastic, found in Nuphar advena (Common spatterdock).